We begin with the raw amino-acid sequence, 265 residues long: Putative hydro-lyase Teth514_1597 (265 aa).

Belongs to the D-glutamate cyclase family.

This Thermoanaerobacter sp. (strain X514) protein is Putative hydro-lyase Teth514_1597.